The primary structure comprises 1124 residues: Putative DNA mismatch repair protein mutS homolog L359 (1124 aa).

Position 779–786 (serine 779–serine 786) interacts with ATP.

The protein belongs to the DNA mismatch repair MutS family.

May be involved in DNA-mismatch repair. The sequence is that of Putative DNA mismatch repair protein mutS homolog L359 from Acanthamoeba polyphaga (Amoeba).